Here is an 858-residue protein sequence, read N- to C-terminus: Bifunctional uridylyltransferase/uridylyl-removing enzyme (858 aa).

The uridylyltransferase stretch occupies residues 1–324 (MSASVAEPPP…PATSGVTRVL (324 aa)). Positions 325 to 681 (SPGRFVEKQG…ARPSPVGDAL (357 aa)) are uridylyl-removing. An HD domain is found at 443-565 (VDQHILMVLR…VGSERRLTAL (123 aa)). 2 ACT domains span residues 682-761 (QVLV…PEPS) and 790-858 (ILSV…AIAV).

Belongs to the GlnD family. Mg(2+) is required as a cofactor.

It catalyses the reaction [protein-PII]-L-tyrosine + UTP = [protein-PII]-uridylyl-L-tyrosine + diphosphate. It carries out the reaction [protein-PII]-uridylyl-L-tyrosine + H2O = [protein-PII]-L-tyrosine + UMP + H(+). Uridylyltransferase (UTase) activity is inhibited by glutamine, while glutamine activates uridylyl-removing (UR) activity. Functionally, modifies, by uridylylation and deuridylylation, the PII regulatory proteins (GlnB and homologs), in response to the nitrogen status of the cell that GlnD senses through the glutamine level. Under low glutamine levels, catalyzes the conversion of the PII proteins and UTP to PII-UMP and PPi, while under higher glutamine levels, GlnD hydrolyzes PII-UMP to PII and UMP (deuridylylation). Thus, controls uridylylation state and activity of the PII proteins, and plays an important role in the regulation of nitrogen assimilation and metabolism. This chain is Bifunctional uridylyltransferase/uridylyl-removing enzyme, found in Burkholderia mallei (strain NCTC 10247).